We begin with the raw amino-acid sequence, 352 residues long: MRKVRAIVIDDSAFMRKIISDILDNDPRIEVVAVARNGEDGLNKVIQLSPDVVTLDVHMPKMDGMQALQRIMNEHPVPVVMLSSVTKAGAEKTIQAISNGAVDFIMKPSGSISLDIRNVEDEIRKKVILASTVRVKSTQEASEEDFQSTRTVPTINREKKYRRSIVSIGTSTGGPKALQKVLTELPKDIQAPIVIVQHMPPGFTKSLADRLNSICAISVKEAVHGEILQSGTAYIAPGGFHMQVENVGMSLAIALDKSPPLKGHRPSVNKLFSSLQHIKNYNKITCILTGMGNDGTDGLQQLRLNEGSTISLAESADTAIVYGMPKAAVNAGLIDYEMSLHEIPSLIVKQLT.

The Response regulatory domain maps to 5–122; the sequence is RAIVIDDSAF…SLDIRNVEDE (118 aa). Asp56 is subject to 4-aspartylphosphate. A CheB-type methylesterase domain is found at 163–352; the sequence is RSIVSIGTST…IPSLIVKQLT (190 aa). Residues Ser171, His198, and Asp294 contribute to the active site.

This sequence belongs to the CheB family. Phosphorylated by CheA. Phosphorylation of the N-terminal regulatory domain activates the methylesterase activity.

Its subcellular location is the cytoplasm. The enzyme catalyses [protein]-L-glutamate 5-O-methyl ester + H2O = L-glutamyl-[protein] + methanol + H(+). It carries out the reaction L-glutaminyl-[protein] + H2O = L-glutamyl-[protein] + NH4(+). In terms of biological role, involved in chemotaxis. Part of a chemotaxis signal transduction system that modulates chemotaxis in response to various stimuli. Catalyzes the demethylation of specific methylglutamate residues introduced into the chemoreceptors (methyl-accepting chemotaxis proteins or MCP) by CheR. Also mediates the irreversible deamidation of specific glutamine residues to glutamic acid. This chain is Protein-glutamate methylesterase/protein-glutamine glutaminase, found in Oceanobacillus iheyensis (strain DSM 14371 / CIP 107618 / JCM 11309 / KCTC 3954 / HTE831).